The primary structure comprises 716 residues: Translation initiation factor IF-2 (716 aa).

Residues 50 to 136 are disordered; it reads YKKGGARAKS…VKPKKELPEK (87 aa). Over residues 62-84 the composition is skewed to polar residues; that stretch reads PAETNKNKQPQGVNQQSAGNQPN. The segment covering 101-113 has biased composition (basic residues); it reads KNKKNNNNKKNKR. Residues 114–126 are compositionally biased toward low complexity; it reads NNNNNKNQHQQKP. The 170-residue stretch at 217 to 386 folds into the tr-type G domain; that stretch reads IRPPVVTIMG…LLVSEVEELK (170 aa). Positions 226-233 are G1; sequence GHVDHGKT. 226 to 233 provides a ligand contact to GTP; the sequence is GHVDHGKT. The G2 stretch occupies residues 251–255; that stretch reads GITQH. Residues 272–275 are G3; it reads DTPG. GTP is bound by residues 272-276 and 326-329; these read DTPGH and NKID. The tract at residues 326–329 is G4; it reads NKID. A G5 region spans residues 362 to 364; that stretch reads SAL.

This sequence belongs to the TRAFAC class translation factor GTPase superfamily. Classic translation factor GTPase family. IF-2 subfamily.

The protein resides in the cytoplasm. In terms of biological role, one of the essential components for the initiation of protein synthesis. Protects formylmethionyl-tRNA from spontaneous hydrolysis and promotes its binding to the 30S ribosomal subunits. Also involved in the hydrolysis of GTP during the formation of the 70S ribosomal complex. The polypeptide is Translation initiation factor IF-2 (infB) (Bacillus subtilis (strain 168)).